We begin with the raw amino-acid sequence, 149 residues long: D-aminoacyl-tRNA deacylase (149 aa).

A Gly-cisPro motif, important for rejection of L-amino acids motif is present at residues 137–138; sequence GP.

Belongs to the DTD family. Homodimer.

Its subcellular location is the cytoplasm. The catalysed reaction is glycyl-tRNA(Ala) + H2O = tRNA(Ala) + glycine + H(+). It catalyses the reaction a D-aminoacyl-tRNA + H2O = a tRNA + a D-alpha-amino acid + H(+). An aminoacyl-tRNA editing enzyme that deacylates mischarged D-aminoacyl-tRNAs. Also deacylates mischarged glycyl-tRNA(Ala), protecting cells against glycine mischarging by AlaRS. Acts via tRNA-based rather than protein-based catalysis; rejects L-amino acids rather than detecting D-amino acids in the active site. By recycling D-aminoacyl-tRNA to D-amino acids and free tRNA molecules, this enzyme counteracts the toxicity associated with the formation of D-aminoacyl-tRNA entities in vivo and helps enforce protein L-homochirality. The chain is D-aminoacyl-tRNA deacylase from Thermotoga petrophila (strain ATCC BAA-488 / DSM 13995 / JCM 10881 / RKU-1).